The following is a 34-amino-acid chain: Cytochrome b6-f complex subunit 8 (34 aa).

A helical transmembrane segment spans residues 3 to 23 (IFQIGWAALAAIFTFSIAMVV).

This sequence belongs to the PetN family. The 4 large subunits of the cytochrome b6-f complex are cytochrome b6, subunit IV (17 kDa polypeptide, PetD), cytochrome f and the Rieske protein, while the 4 small subunits are PetG, PetL, PetM and PetN. The complex functions as a dimer.

It localises to the cellular thylakoid membrane. Functionally, component of the cytochrome b6-f complex, which mediates electron transfer between photosystem II (PSII) and photosystem I (PSI), cyclic electron flow around PSI, and state transitions. The sequence is that of Cytochrome b6-f complex subunit 8 from Prochlorococcus marinus subsp. pastoris (strain CCMP1986 / NIES-2087 / MED4).